Here is a 1488-residue protein sequence, read N- to C-terminus: Chromosome partition protein MukB (1488 aa).

ATP is bound at residue G34–S41. Coiled-coil stretches lie at residues L326–Q418, L444–H472, and R509–P602. The segment at P666–R783 is flexible hinge. Coiled coils occupy residues E835–E923, E977–G1116, and V1209–V1265.

It belongs to the SMC family. MukB subfamily. Homodimerization via its hinge domain. Binds to DNA via its C-terminal region. Interacts, and probably forms a ternary complex, with MukE and MukF via its C-terminal region. The complex formation is stimulated by calcium or magnesium. Interacts with tubulin-related protein FtsZ.

The protein resides in the cytoplasm. It localises to the nucleoid. In terms of biological role, plays a central role in chromosome condensation, segregation and cell cycle progression. Functions as a homodimer, which is essential for chromosome partition. Involved in negative DNA supercoiling in vivo, and by this means organize and compact chromosomes. May achieve or facilitate chromosome segregation by condensation DNA from both sides of a centrally located replisome during cell division. This is Chromosome partition protein MukB from Salmonella paratyphi B (strain ATCC BAA-1250 / SPB7).